A 223-amino-acid chain; its full sequence is Small heat shock protein hspI, mitochondrial (223 aa).

The transit peptide at 1–23 (MYKLSKTTPFFFRRAFLCGRRGG) directs the protein to the mitochondrion. Positions 109 to 223 (KTRGFRSPKT…YVKSTTINVQ (115 aa)) constitute a sHSP domain.

The protein belongs to the small heat shock protein (HSP20) family.

The protein resides in the mitochondrion. The polypeptide is Small heat shock protein hspI, mitochondrial (hspI) (Dictyostelium discoideum (Social amoeba)).